Reading from the N-terminus, the 109-residue chain is Spermidine export protein MdtI (109 aa).

A run of 4 helical transmembrane segments spans residues 6-26 (WVHAAWLALAIVLEIVANVFL), 36-56 (IFGLLSLAAVLAAFSALSQAV), 64-84 (AYALWGGFGIAATLAAGWILF), and 88-108 (LNRKGWIGLVLLLAGMIMVKL).

The protein belongs to the drug/metabolite transporter (DMT) superfamily. Small multidrug resistance (SMR) (TC 2.A.7.1) family. MdtI subfamily. In terms of assembly, forms a complex with MdtJ.

It localises to the cell inner membrane. Its function is as follows. Catalyzes the excretion of spermidine. This is Spermidine export protein MdtI from Escherichia coli O139:H28 (strain E24377A / ETEC).